Here is a 378-residue protein sequence, read N- to C-terminus: Mannitol-1-phosphate 5-dehydrogenase (378 aa).

4–15 (SVHFGAGNIGRG) lines the NAD(+) pocket.

This sequence belongs to the mannitol dehydrogenase family.

The catalysed reaction is D-mannitol 1-phosphate + NAD(+) = beta-D-fructose 6-phosphate + NADH + H(+). The protein is Mannitol-1-phosphate 5-dehydrogenase of Streptococcus pneumoniae (strain ATCC BAA-255 / R6).